The following is a 274-amino-acid chain: 2,3,4,5-tetrahydropyridine-2,6-dicarboxylate N-succinyltransferase (274 aa).

R104 and D141 together coordinate substrate.

Belongs to the transferase hexapeptide repeat family. Homotrimer.

It localises to the cytoplasm. The enzyme catalyses (S)-2,3,4,5-tetrahydrodipicolinate + succinyl-CoA + H2O = (S)-2-succinylamino-6-oxoheptanedioate + CoA. The protein operates within amino-acid biosynthesis; L-lysine biosynthesis via DAP pathway; LL-2,6-diaminopimelate from (S)-tetrahydrodipicolinate (succinylase route): step 1/3. This Salmonella typhi protein is 2,3,4,5-tetrahydropyridine-2,6-dicarboxylate N-succinyltransferase.